The primary structure comprises 164 residues: UPF0304 protein YfbU (164 aa).

Belongs to the UPF0304 family.

The protein is UPF0304 protein YfbU of Escherichia coli O127:H6 (strain E2348/69 / EPEC).